A 487-amino-acid chain; its full sequence is uncharacterized protein (487 aa).

ABC transporter domains are found at residues V5–K249 and I265–A487. G297–T304 serves as a coordination point for ATP.

It belongs to the ABC transporter superfamily.

Its subcellular location is the mitochondrion. This is an uncharacterized protein from Schizosaccharomyces pombe (strain 972 / ATCC 24843) (Fission yeast).